The sequence spans 197 residues: Allatostatins (197 aa).

Residues 1-27 (MRSRTSVLTSSLAFLYFFGIVGRSALA) form the signal peptide. Residues 28–56 (MEETPASSMNLQHYNNMLNPMVFDDTMPE) constitute a propeptide that is removed on maturation. Ile-76 carries the post-translational modification Isoleucine amide. A propeptide spanning residues 80–86 (WIDTNDN) is cleaved from the precursor. Residues Leu-96, Leu-106, Leu-154, and Leu-184 each carry the leucine amide modification. The disordered stretch occupies residues 161-197 (YSGGQPLGSKRPNDMLSQRYHFGLGKRMSEDEEESSQ). A propeptide spanning residues 188–197 (MSEDEEESSQ) is cleaved from the precursor.

It belongs to the allatostatin family.

Its subcellular location is the secreted. Neuropeptides. The protein is Allatostatins of Apis mellifera (Honeybee).